Consider the following 153-residue polypeptide: Transcriptional repressor NrdR (153 aa).

A zinc finger spans residues 3 to 34; that stretch reads CPSCQHHGTRVLDSRPVDEGRSIRRRRECEQC. Residues 49–139 form the ATP-cone domain; the sequence is LIVVKKQGMR…VYRQFKDLNV (91 aa).

Belongs to the NrdR family. The cofactor is Zn(2+).

Negatively regulates transcription of bacterial ribonucleotide reductase nrd genes and operons by binding to NrdR-boxes. The protein is Transcriptional repressor NrdR of Geobacillus sp. (strain WCH70).